The chain runs to 605 residues: Glucose oxidase (605 aa).

An N-terminal signal peptide occupies residues M1 to A18. FAD contacts are provided by L52, T53, and E73. N-linked (GlcNAc...) asparagine glycosylation occurs at N111. S125, N129, G130, and S132 together coordinate FAD. 2 N-linked (GlcNAc...) asparagine glycosylation sites follow: N183 and N190. Residues C186 and C228 are joined by a disulfide bond. V272 is an FAD binding site. N335, N375, N410, and N519 each carry an N-linked (GlcNAc...) asparagine glycan. H538 (proton acceptor) is an active-site residue. K559 and V560 together coordinate O2. The FAD site is built by G571 and M583.

Belongs to the GMC oxidoreductase family. As to quaternary structure, homodimer. FAD is required as a cofactor.

The protein localises to the secreted. Its subcellular location is the cell wall. The protein resides in the cytoplasmic vesicle. It catalyses the reaction beta-D-glucose + O2 = D-glucono-1,5-lactone + H2O2. In terms of biological role, glucose oxidase catalyzes the oxidation of beta-D-glucose to D-glucono-delta-lactone and hydrogen peroxide in the presence of molecular oxygen. D-glucono-delta-lactone is sequentially hydrolyzed by lactonase to D-gluconic acid, and the resulting hydrogen peroxide is hydrolyzed by catalase to oxygen and water. Glucose oxidase alone indirectly causes toxicity in the presence of glucose and is the active compound of the antifungal antibiotic talaron. Responsible for inhibition of germination of microsclerotia of Verticillium dahliae. In Talaromyces flavus, this protein is Glucose oxidase.